A 381-amino-acid polypeptide reads, in one-letter code: Succinyl-diaminopimelate desuccinylase (381 aa).

Residue His-70 participates in Zn(2+) binding. Asp-72 is an active-site residue. Asp-103 serves as a coordination point for Zn(2+). The active-site Proton acceptor is the Glu-136. Zn(2+) is bound by residues Glu-137, Glu-165, and His-354.

The protein belongs to the peptidase M20A family. DapE subfamily. As to quaternary structure, homodimer. Requires Zn(2+) as cofactor. The cofactor is Co(2+).

The enzyme catalyses N-succinyl-(2S,6S)-2,6-diaminopimelate + H2O = (2S,6S)-2,6-diaminopimelate + succinate. It participates in amino-acid biosynthesis; L-lysine biosynthesis via DAP pathway; LL-2,6-diaminopimelate from (S)-tetrahydrodipicolinate (succinylase route): step 3/3. Its function is as follows. Catalyzes the hydrolysis of N-succinyl-L,L-diaminopimelic acid (SDAP), forming succinate and LL-2,6-diaminopimelate (DAP), an intermediate involved in the bacterial biosynthesis of lysine and meso-diaminopimelic acid, an essential component of bacterial cell walls. This chain is Succinyl-diaminopimelate desuccinylase, found in Roseobacter denitrificans (strain ATCC 33942 / OCh 114) (Erythrobacter sp. (strain OCh 114)).